We begin with the raw amino-acid sequence, 219 residues long: Transmembrane protein 17A (219 aa).

Residues N18 and N27 are each glycosylated (N-linked (GlcNAc...) asparagine). The next 4 membrane-spanning stretches (helical) occupy residues 56–76, 83–103, 121–141, and 153–173; these read MMLY…LLML, LPVY…IFEV, LAGF…FFIT, and AVHS…FLAL.

Belongs to the TMEM17 family. As to quaternary structure, part of the tectonic-like complex (also named B9 complex).

The protein localises to the cell projection. The protein resides in the cilium membrane. In terms of biological role, transmembrane component of the tectonic-like complex, a complex localized at the transition zone of primary cilia and acting as a barrier that prevents diffusion of transmembrane proteins between the cilia and plasma membranes. Required for ciliogenesis and sonic hedgehog/SHH signaling. This chain is Transmembrane protein 17A (tmem17a), found in Danio rerio (Zebrafish).